A 602-amino-acid chain; its full sequence is MQHDLPGGRHDEADSSETGGAGTTENPSSEQARQIRFLEEEVALLRRKLTDSPRQNRVLEQRLAEANERVSQLTERNNKLVETLREARSQLLALREEVDRLAQPPSGYGVFIAAYDDNTVDVFTSGRKMRVAVSPTVDIQSLRRGQSVRLNEALTVVEVGGFESTGEVCTLREVLAPDTEGGSARALVAGHTDEERVVWLADPLAEQTLKPGDSLLVDPKAGYAYERVPKAEVEDLVLEEVPDVRYEDIGGLYRQIEQIRDAVELPFLHADLYTQYKLRPPKGVLLYGPPGCGKTLIAKAVANSLAKQVAAATGEKDAKSYFLNIKGPELLNKFVGETERHIRMIFQRAREKASDGTPVIVFFDEMESIFRTRGSGVSSDVETTIVPQLLSEIDGVEGLENVIVIGASNREDMIDPAILRPGRLDVKIKIERPDAEGAKDIFSKYLTPDLPIHADDLAEFGGDRQATIDAMIQHTVERMYEESEENRFLEVTYANGDKEVLYFRDFNSGAMIQNIVDRAKKAAIKSVLETNQPGLRVQHLLDAIVDEFAENEDLPNTTNPDDWARISGKKGERIVYIRTLVTGKNQESGRVIDTATNTGQYL.

Over residues 1–13 (MQHDLPGGRHDEA) the composition is skewed to basic and acidic residues. The tract at residues 1 to 33 (MQHDLPGGRHDEADSSETGGAGTTENPSSEQAR) is disordered. Over residues 23–32 (TTENPSSEQA) the composition is skewed to polar residues. A coiled-coil region spans residues 28–103 (SSEQARQIRF…LREEVDRLAQ (76 aa)). 291-296 (GCGKTL) lines the ATP pocket. The segment at 601 to 602 (YL) is docks into pockets in the proteasome alpha-ring.

This sequence belongs to the AAA ATPase family. In terms of assembly, homohexamer. Assembles into a hexameric ring structure that caps the 20S proteasome core. Strongly interacts with the prokaryotic ubiquitin-like protein Pup through a hydrophobic interface; the interacting region of ARC lies in its N-terminal coiled-coil domain. There is one Pup binding site per ARC hexamer ring. Upon ATP-binding, the C-terminus of ARC interacts with the alpha-rings of the proteasome core, possibly by binding to the intersubunit pockets.

It functions in the pathway protein degradation; proteasomal Pup-dependent pathway. ATPase which is responsible for recognizing, binding, unfolding and translocation of pupylated proteins into the bacterial 20S proteasome core particle. May be essential for opening the gate of the 20S proteasome via an interaction with its C-terminus, thereby allowing substrate entry and access to the site of proteolysis. Thus, the C-termini of the proteasomal ATPase may function like a 'key in a lock' to induce gate opening and therefore regulate proteolysis. The polypeptide is Proteasome-associated ATPase (Saccharomonospora viridis (strain ATCC 15386 / DSM 43017 / JCM 3036 / CCUG 5913 / NBRC 12207 / NCIMB 9602 / P101) (Thermoactinomyces viridis)).